The primary structure comprises 652 residues: MNPNNRSEHDTIKVTPNSELQTNHNQYPLADNPNSTLEELNYKEFLRMTEDSSTEVLDNSTVKDAVGTGISVVGQILGVVGVPFAGALTSFYQSFLNTIWPSDADPWKAFMAQVEVLIDKKIEEYAKSKALAELQGLQNNFEDYVNALNSWKKTPLSLRSKRSQDRIRELFSQAESHFRNSMPSFAVSKFEVLFLPTYAQAANTHLLLLKDAQVFGEEWGYSSEDVAEFYHRQLKLTQQYTDHCVNWYNVGLNGLRGSTYDAWVKFNRFRREMTLTVLDLIVLFPFYDIRLYSKGVKTELTRDIFTDPIFSLNTLQEYGPTFLSIENSIRKPHLFDYLQGIEFHTRLQPGYFGKDSFNYWSGNYVETRPSIGSSKTITSPFYGDKSTEPVQKLSFDGQKVYRTIANTDVAAWPNGKVYLGVTKVDFSQYDDQKNETSTQTYDSKRNNGHVSAQDSIDQLPPETTDEPLEKAYSHQLNYAECFLMQDRRGTIPFFTWTHRSVDFFNTIDAEKITQLPVVKAYALSSGASIIEGPGFTGGNLLFLKESSNSIAKFKVTLNSAALLQRYRVRIRYASTTNLRLFVQNSNNDFLVIYINKTMNKDDDLTYQTFDLATTNSNMGFSGDKNELIIGAESFVSNEKIYIDKIEFIPVQL.

The segment covering 1–12 (MNPNNRSEHDTI) has biased composition (basic and acidic residues). Disordered stretches follow at residues 1-33 (MNPNNRSEHDTIKVTPNSELQTNHNQYPLADNP) and 433-465 (KNETSTQTYDSKRNNGHVSAQDSIDQLPPETTD). The span at 14–33 (VTPNSELQTNHNQYPLADNP) shows a compositional bias: polar residues.

Belongs to the delta endotoxin family. Monomer.

Promotes colloidosmotic lysis by binding to the midgut epithelial cells of Coleoptera. Has moderate level of toxicity to southern corn rootworm. The sequence is that of Pesticidal crystal protein Cry3Bb (cry3Bb) from Bacillus thuringiensis.